The primary structure comprises 200 residues: Shikimate kinase (200 aa).

33–38 (GAGKST) is a binding site for ATP. Ser-37 is a binding site for Mg(2+). Residues Asp-55, Arg-79, and Gly-101 each coordinate substrate. Arg-139 is a binding site for ATP. Arg-158 contacts substrate.

Belongs to the shikimate kinase family. Monomer. The cofactor is Mg(2+).

The protein localises to the cytoplasm. It catalyses the reaction shikimate + ATP = 3-phosphoshikimate + ADP + H(+). It participates in metabolic intermediate biosynthesis; chorismate biosynthesis; chorismate from D-erythrose 4-phosphate and phosphoenolpyruvate: step 5/7. Functionally, catalyzes the specific phosphorylation of the 3-hydroxyl group of shikimic acid using ATP as a cosubstrate. This is Shikimate kinase from Brucella abortus (strain S19).